The primary structure comprises 215 residues: Cytochrome b6 (215 aa).

Residues 32–52 (VFYCFGGMTLTCFLVQLATGF) form a helical membrane-spanning segment. Cys-35 contacts heme c. 2 residues coordinate heme b: His-86 and His-100. The next 3 membrane-spanning stretches (helical) occupy residues 90–110 (ASMM…TGGF), 116–136 (LTWI…VTGY), and 186–206 (LHTL…FLMI). The heme b site is built by His-187 and His-202.

The protein belongs to the cytochrome b family. PetB subfamily. In terms of assembly, the 4 large subunits of the cytochrome b6-f complex are cytochrome b6, subunit IV (17 kDa polypeptide, PetD), cytochrome f and the Rieske protein, while the 4 small subunits are PetG, PetL, PetM and PetN. The complex functions as a dimer. The cofactor is heme b. Requires heme c as cofactor.

The protein resides in the plastid. The protein localises to the chloroplast thylakoid membrane. Its function is as follows. Component of the cytochrome b6-f complex, which mediates electron transfer between photosystem II (PSII) and photosystem I (PSI), cyclic electron flow around PSI, and state transitions. This chain is Cytochrome b6, found in Cyanidium caldarium (Red alga).